The sequence spans 268 residues: MERYESLFAQLKERKEGAFVPFVTLGDPGIEQSLKIIDTLIEAGADALELGIPFSDPLADGPTIQNATLRAFAAGVTPAQCFEMLALIRQKHPTIPIGLLMYANLVFNKGIDEFYAQCEKVGVDSVLVADVPVEESAPFRQAALRHNVAPIFICPPNADDDLLRQIASYGRGYTYLLSRAGVTGAENRAALPLNHLVAKLKEYNAAPPLQGFGISAPDQVKAAIDAGAAGAISGSAIVKIIEQHINEPEKMLAALKVFVQPMKAATSS.

Catalysis depends on proton acceptor residues glutamate 49 and aspartate 60.

The protein belongs to the TrpA family. In terms of assembly, tetramer of two alpha and two beta chains.

It catalyses the reaction (1S,2R)-1-C-(indol-3-yl)glycerol 3-phosphate + L-serine = D-glyceraldehyde 3-phosphate + L-tryptophan + H2O. It participates in amino-acid biosynthesis; L-tryptophan biosynthesis; L-tryptophan from chorismate: step 5/5. In terms of biological role, the alpha subunit is responsible for the aldol cleavage of indoleglycerol phosphate to indole and glyceraldehyde 3-phosphate. This Shigella boydii serotype 18 (strain CDC 3083-94 / BS512) protein is Tryptophan synthase alpha chain.